We begin with the raw amino-acid sequence, 169 residues long: Peptide deformylase (169 aa).

2 residues coordinate Fe cation: C91 and H133. E134 is a catalytic residue. A Fe cation-binding site is contributed by H137.

The protein belongs to the polypeptide deformylase family. Requires Fe(2+) as cofactor.

The catalysed reaction is N-terminal N-formyl-L-methionyl-[peptide] + H2O = N-terminal L-methionyl-[peptide] + formate. In terms of biological role, removes the formyl group from the N-terminal Met of newly synthesized proteins. Requires at least a dipeptide for an efficient rate of reaction. N-terminal L-methionine is a prerequisite for activity but the enzyme has broad specificity at other positions. The chain is Peptide deformylase from Salmonella agona (strain SL483).